Reading from the N-terminus, the 177-residue chain is Ribosome maturation factor RimM (177 aa).

The PRC barrel domain maps to 100 to 177; sequence EDEYYWSDLV…TVLVAWPSDY (78 aa).

Belongs to the RimM family. In terms of assembly, binds ribosomal protein uS19.

The protein resides in the cytoplasm. Its function is as follows. An accessory protein needed during the final step in the assembly of 30S ribosomal subunit, possibly for assembly of the head region. Essential for efficient processing of 16S rRNA. May be needed both before and after RbfA during the maturation of 16S rRNA. It has affinity for free ribosomal 30S subunits but not for 70S ribosomes. This is Ribosome maturation factor RimM from Psychrobacter arcticus (strain DSM 17307 / VKM B-2377 / 273-4).